A 233-amino-acid polypeptide reads, in one-letter code: Chromosome partition protein MukE (233 aa).

The disordered stretch occupies residues 207–233; sequence SLSLHDESDDADVTMGNAADSVEDEQE.

The protein belongs to the MukE family. As to quaternary structure, interacts, and probably forms a ternary complex, with MukF and MukB. The complex formation is stimulated by calcium or magnesium.

It localises to the cytoplasm. The protein resides in the nucleoid. Involved in chromosome condensation, segregation and cell cycle progression. May participate in facilitating chromosome segregation by condensation DNA from both sides of a centrally located replisome during cell division. Probably acts via its interaction with MukB and MukF. This Yersinia pestis protein is Chromosome partition protein MukE.